The chain runs to 127 residues: MKFETINQESIAKLMEIFYEKVRKDKDLGPIFNNAIGTSDEEWKEHKAKIGNFWAGMLLGEGDYNGQPLKKHLDLPPFPQEFFEIWLKLFEESLNIVYNEEMKNVILQRAQMIASHFQNMLYKYGGH.

Heme is bound by residues Tyr64 and His72.

Belongs to the truncated hemoglobin family. Group III subfamily. As to quaternary structure, monomer. Heme is required as a cofactor.

It is found in the cytoplasm. Its function is as follows. Has been suggested to be involved in cytochrome c peroxidase or P450-like oxygen chemistry or cyanide detoxification. The high oxygen affinity of this protein suggests that it probably does not function as an oxygen transporter. The chain is Group 3 truncated hemoglobin ctb (ctb) from Campylobacter jejuni subsp. jejuni serotype O:2 (strain ATCC 700819 / NCTC 11168).